We begin with the raw amino-acid sequence, 255 residues long: Hydroxylmethylpyrimidine kinase (255 aa).

Pyridoxal 5'-phosphate-binding residues include Gly18, Gln43, and Asn110. Residue Gln43 coordinates 4-amino-5-hydroxymethyl-2-methylpyrimidine. Cys195 and Cys207 are joined by a disulfide. Ser208 contributes to the pyridoxal 5'-phosphate binding site.

Belongs to the ThiD family. In terms of assembly, homodimer. Crystals show a disulfide bond between Cys-195 and Cys-207. This disulfide is possibly an artifact of the purification and crystallization conditions. However, as it is adjacent to the conserved GSGC of the oxyanion hole, this disulfide may help to orient the backbone amides toward the oxanion intermediate.

The enzyme catalyses 4-amino-5-hydroxymethyl-2-methylpyrimidine + ATP = 4-amino-2-methyl-5-(phosphooxymethyl)pyrimidine + ADP + H(+). Its pathway is cofactor biosynthesis; thiamine diphosphate biosynthesis. Its activity is regulated as follows. Inhibited by pyridoxal phosphate at high micromolar concentrations. In terms of biological role, catalyzes the phosphorylation of hydroxymethylpyrimidine (HMP) to hydroxymethylpyrimidine phosphate (HMP-P). Unlike other HMPKs, it cannot catalyze the phosphorylation of HMP-P to generate the diphosphate HMP-PP. Shows no activity with pyridoxal, pyridoxamine or pyridoxine. Does not show phosphatase activity. This Acinetobacter baumannii (strain IS-123) protein is Hydroxylmethylpyrimidine kinase.